Reading from the N-terminus, the 388-residue chain is (S)-8-oxocitronellyl enol synthase ISY1 (388 aa).

NADP(+)-binding positions include 35–37 (TGI), 63–64 (RR), 81–82 (DV), 105–106 (TW), and glutamine 143. Catalysis depends on residues lysine 147 and tyrosine 178. NADP(+)-binding positions include tyrosine 178, isoleucine 205, and 212–214 (SMM).

It belongs to the short-chain dehydrogenases/reductases (SDR) family.

The catalysed reaction is (S)-8-oxocitronellyl enol + NADP(+) = (6E)-8-oxogeranial + NADPH + H(+). It carries out the reaction (S)-8-oxocitronellyl enol + NAD(+) = (6E)-8-oxogeranial + NADH + H(+). Its function is as follows. Iridoid synthase that catalyzes the first step in generation of the iridoid ring scaffold using the linear monoterpene (6E)-8-oxogeranial as substrate. Iridoids comprise a large family of distinctive bicyclic monoterpenes that possess a wide range of pharmacological activities, including anticancer, anti-inflammatory, antifungal and antibacterial activities. Catalyzes the conversion of the linear monoterpene (6E)-8-oxogeranial to (S)-8-oxocitronellyl enol, a precursor of nepetalactones, which are metabolites that are both insect-repellent and have euphoric effect in cats. This is (S)-8-oxocitronellyl enol synthase ISY1 from Nepeta cataria (Catnip).